The primary structure comprises 1517 residues: DNA-directed RNA polymerase subunit beta' (1517 aa).

The Zn(2+) site is built by cysteine 71, cysteine 73, cysteine 86, and cysteine 89. Aspartate 482, aspartate 484, and aspartate 486 together coordinate Mg(2+). 4 residues coordinate Zn(2+): cysteine 812, cysteine 886, cysteine 893, and cysteine 896.

Belongs to the RNA polymerase beta' chain family. As to quaternary structure, the RNAP catalytic core consists of 2 alpha, 1 beta, 1 beta' and 1 omega subunit. When a sigma factor is associated with the core the holoenzyme is formed, which can initiate transcription. The cofactor is Mg(2+). Requires Zn(2+) as cofactor.

It carries out the reaction RNA(n) + a ribonucleoside 5'-triphosphate = RNA(n+1) + diphosphate. DNA-dependent RNA polymerase catalyzes the transcription of DNA into RNA using the four ribonucleoside triphosphates as substrates. The protein is DNA-directed RNA polymerase subunit beta' of Campylobacter jejuni subsp. jejuni serotype O:6 (strain 81116 / NCTC 11828).